Here is a 68-residue protein sequence, read N- to C-terminus: Large ribosomal subunit protein bL31 (68 aa).

Zn(2+) contacts are provided by Cys-17, Cys-19, Cys-37, and Cys-40.

It belongs to the bacterial ribosomal protein bL31 family. Type A subfamily. As to quaternary structure, part of the 50S ribosomal subunit. The cofactor is Zn(2+).

Its function is as follows. Binds the 23S rRNA. The sequence is that of Large ribosomal subunit protein bL31 from Dehalococcoides mccartyi (strain ATCC BAA-2266 / KCTC 15142 / 195) (Dehalococcoides ethenogenes (strain 195)).